Consider the following 148-residue polypeptide: Large ribosomal subunit protein bL9 (148 aa).

It belongs to the bacterial ribosomal protein bL9 family.

Functionally, binds to the 23S rRNA. This chain is Large ribosomal subunit protein bL9, found in Pelotomaculum thermopropionicum (strain DSM 13744 / JCM 10971 / SI).